The following is a 493-amino-acid chain: Xaa-Pro dipeptidase (493 aa).

Residue Ala2 is modified to N-acetylalanine. Position 167 is a phosphoserine (Ser167). A dipeptide is bound at residue His255. Residues Asp276, Asp287, and His370 each contribute to the Mn(2+) site. Residue Asp287 coordinates a dipeptide. A dipeptide is bound by residues His377 and Arg398. Glu412 and Glu452 together coordinate Mn(2+).

It belongs to the peptidase M24B family. Eukaryotic-type prolidase subfamily. In terms of assembly, homodimer. Requires Mn(2+) as cofactor.

The catalysed reaction is Xaa-L-Pro dipeptide + H2O = an L-alpha-amino acid + L-proline. Functionally, dipeptidase that catalyzes the hydrolysis of dipeptides with a prolyl (Xaa-Pro) or hydroxyprolyl residue in the C-terminal position. The preferred dipeptide substrate is Gly-Pro, but other Xaa-Pro dipeptides, such as Ala-Pro, Met-Pro, Phe-Pro, Val-Pro and Leu-Pro, can be cleaved. Plays an important role in collagen metabolism because the high level of iminoacids in collagen. The chain is Xaa-Pro dipeptidase (PEPD) from Pongo abelii (Sumatran orangutan).